A 21-amino-acid chain; its full sequence is Preblooming protein 2 (21 aa).

In terms of biological role, possible mediator for cell division in the blooming process. This is Preblooming protein 2 from Prorocentrum triestinum (Red tide alga).